Reading from the N-terminus, the 453-residue chain is Serine/threonine-protein phosphatase 2A regulatory subunit B'' subunit gamma (453 aa).

EF-hand domains follow at residues 273 to 308 (PSALRVYGQYLNLDKDHNGMLSKEELSRYGTATMTN) and 341 to 376 (KEPAALQYIFKLLDIENKGYLNVFSLNYFFRAIQEL). Ca(2+)-binding residues include Asp-286, Asp-288, Asn-290, Met-292, and Glu-297.

As to quaternary structure, interacts with MCM3AP/GANP. Interacts with PPP5C, and the phosphatase 2A core enzyme composed of the PPP2CA catalytic subunit and the constant regulatory subunit PPP2R1A. Finds in a complex with ABCB1, TFPI2 and PPP2R3C; leading to the dephosphorylation of ABCB1. As to expression, ubiquitously expressed in brain and other tissues.

It is found in the nucleus. The protein resides in the cytoplasm. Functionally, may regulate MCM3AP phosphorylation through phosphatase recruitment. May act as a negative regulator of ABCB1 expression and function through the dephosphorylation of ABCB1 by TFPI2/PPP2R3C complex. May play a role in the activation-induced cell death of B-cells. The sequence is that of Serine/threonine-protein phosphatase 2A regulatory subunit B'' subunit gamma (PPP2R3C) from Homo sapiens (Human).